Reading from the N-terminus, the 259-residue chain is MTDLKASSLRALKLMDLTTLNDDDTDEKVIALCHQAKTPVGNTAAICIYPRFIPIARKTLKEQGTPEIRIATVTNFPHGNDDIEIALAETRAAIAYGADEVDVVFPYRALMAGNEQVGFDLVKACKEACAAANVLLKVIIETGELKDEALIRKASEISIKAGADFIKTSTGKVAVNATPESARIMMEVIRDMGVEKTVGFKPAGGVRTAEDAQKYLAIADELFGADWADARHYRFGASSLLASLLKALGHGDGKSASSY.

Aspartate 102 serves as the catalytic Proton donor/acceptor. Lysine 167 serves as the catalytic Schiff-base intermediate with acetaldehyde. Residue lysine 201 is the Proton donor/acceptor of the active site.

The protein belongs to the DeoC/FbaB aldolase family. DeoC type 2 subfamily.

It is found in the cytoplasm. The catalysed reaction is 2-deoxy-D-ribose 5-phosphate = D-glyceraldehyde 3-phosphate + acetaldehyde. It participates in carbohydrate degradation; 2-deoxy-D-ribose 1-phosphate degradation; D-glyceraldehyde 3-phosphate and acetaldehyde from 2-deoxy-alpha-D-ribose 1-phosphate: step 2/2. In terms of biological role, catalyzes a reversible aldol reaction between acetaldehyde and D-glyceraldehyde 3-phosphate to generate 2-deoxy-D-ribose 5-phosphate. This Escherichia fergusonii (strain ATCC 35469 / DSM 13698 / CCUG 18766 / IAM 14443 / JCM 21226 / LMG 7866 / NBRC 102419 / NCTC 12128 / CDC 0568-73) protein is Deoxyribose-phosphate aldolase.